Here is a 341-residue protein sequence, read N- to C-terminus: Glycerol-3-phosphate dehydrogenase [NAD(P)+] (341 aa).

4 residues coordinate NADPH: Ser15, Trp16, Arg36, and Lys110. Sn-glycerol 3-phosphate is bound by residues Lys110, Gly139, and Ser141. NADPH is bound at residue Ala143. Lys194, Asp247, Ser257, Arg258, and Asn259 together coordinate sn-glycerol 3-phosphate. The active-site Proton acceptor is Lys194. An NADPH-binding site is contributed by Arg258. Val282 and Glu284 together coordinate NADPH.

The protein belongs to the NAD-dependent glycerol-3-phosphate dehydrogenase family.

The protein localises to the cytoplasm. It carries out the reaction sn-glycerol 3-phosphate + NAD(+) = dihydroxyacetone phosphate + NADH + H(+). It catalyses the reaction sn-glycerol 3-phosphate + NADP(+) = dihydroxyacetone phosphate + NADPH + H(+). It participates in membrane lipid metabolism; glycerophospholipid metabolism. Catalyzes the reduction of the glycolytic intermediate dihydroxyacetone phosphate (DHAP) to sn-glycerol 3-phosphate (G3P), the key precursor for phospholipid synthesis. In Xanthomonas oryzae pv. oryzae (strain MAFF 311018), this protein is Glycerol-3-phosphate dehydrogenase [NAD(P)+].